Consider the following 198-residue polypeptide: 7-methyl-GTP pyrophosphatase (198 aa).

Asp-75 serves as the catalytic Proton acceptor.

It belongs to the Maf family. YceF subfamily. A divalent metal cation is required as a cofactor.

It localises to the cytoplasm. It carries out the reaction N(7)-methyl-GTP + H2O = N(7)-methyl-GMP + diphosphate + H(+). Functionally, nucleoside triphosphate pyrophosphatase that hydrolyzes 7-methyl-GTP (m(7)GTP). May have a dual role in cell division arrest and in preventing the incorporation of modified nucleotides into cellular nucleic acids. This Bartonella henselae (strain ATCC 49882 / DSM 28221 / CCUG 30454 / Houston 1) (Rochalimaea henselae) protein is 7-methyl-GTP pyrophosphatase.